A 101-amino-acid polypeptide reads, in one-letter code: NADH-quinone oxidoreductase subunit K (101 aa).

A run of 3 helical transmembrane segments spans residues 4–24, 30–50, and 61–81; these read LAHF…GIFL, IVLL…FVAF, and VFVF…LAIL.

It belongs to the complex I subunit 4L family. In terms of assembly, NDH-1 is composed of 14 different subunits. Subunits NuoA, H, J, K, L, M, N constitute the membrane sector of the complex.

The protein localises to the cell inner membrane. It catalyses the reaction a quinone + NADH + 5 H(+)(in) = a quinol + NAD(+) + 4 H(+)(out). In terms of biological role, NDH-1 shuttles electrons from NADH, via FMN and iron-sulfur (Fe-S) centers, to quinones in the respiratory chain. The immediate electron acceptor for the enzyme in this species is believed to be ubiquinone. Couples the redox reaction to proton translocation (for every two electrons transferred, four hydrogen ions are translocated across the cytoplasmic membrane), and thus conserves the redox energy in a proton gradient. This Cupriavidus metallidurans (strain ATCC 43123 / DSM 2839 / NBRC 102507 / CH34) (Ralstonia metallidurans) protein is NADH-quinone oxidoreductase subunit K.